The following is a 149-amino-acid chain: Pleckstrin homology domain-containing family J member 1 (149 aa).

The 94-residue stretch at 15–108 (RAEKAAELSM…WVEALTNASY (94 aa)) folds into the PH domain.

The chain is Pleckstrin homology domain-containing family J member 1 (plekhj1) from Xenopus tropicalis (Western clawed frog).